Here is a 685-residue protein sequence, read N- to C-terminus: Amino acid transporter heavy chain SLC3A1 (685 aa).

Basic and acidic residues predominate over residues methionine 1–isoleucine 11. The interval methionine 1–glutamate 56 is disordered. Residues methionine 1 to glutamate 87 lie on the Cytoplasmic side of the membrane. A Phosphoserine modification is found at serine 10. Residues isoleucine 88–isoleucine 108 traverse the membrane as a helical; Signal-anchor for type II membrane protein segment. Residues alanine 109 to cysteine 685 lie on the Extracellular side of the membrane. Residue asparagine 214 participates in Ca(2+) binding. N-linked (GlcNAc...) asparagine glycans are attached at residues asparagine 214 and asparagine 261. Residues cysteine 242 and cysteine 273 are joined by a disulfide bond. 4 residues coordinate Ca(2+): aspartate 284, phenylalanine 318, leucine 319, and glutamate 321. Residues asparagine 332, asparagine 495, asparagine 513, and asparagine 575 are each glycosylated (N-linked (GlcNAc...) asparagine). Cystine bridges form between cysteine 571–cysteine 666 and cysteine 673–cysteine 685.

As to quaternary structure, disulfide-linked heterodimer composed of the catalytic light subunit SLC7A9 and the heavy subunit SLC3A1. The heterodimer is the minimal functional unit. Assembles in non-covalently linked heterotetramers (dimers of heterodimers) and higher order oligomers; the oligomerization is mediated by SLC3A1 likely to prevent degradation in the endoplasmic reticulum and facilitate heteromer trafficking to the plasma membrane. Disulfide-linked heterodimer composed of the catalytic light subunit SLC7A13 and the heavy subunit SLC3A1. In terms of tissue distribution, expressed in the brush border membrane in the kidney (at protein level). Predominantly expressed in the kidney, small intestine and pancreas. Weakly expressed in liver.

Its subcellular location is the cell membrane. It is found in the apical cell membrane. Functionally, acts as a chaperone that facilitates biogenesis and trafficking of functional transporter heteromers to the plasma membrane. Associates with SLC7A9 to form a functional transporter complex that mediates the electrogenic exchange between cationic amino acids and neutral amino acids, with a stoichiometry of 1:1. SLC7A9-SLC3A1 transporter has system b(0,+)-like activity with high affinity for extracellular cationic amino acids and L-cystine and lower affinity for intracellular neutral amino acids. Substrate exchange is driven by high concentration of intracellular neutral amino acids and the intracellular reduction of L-cystine to L-cysteine. SLC7A9-SLC3A1 acts as a major transporter for reabsorption of L-cystine and dibasic amino acids across the brush border membrane in early proximal tubules. Associates with SLC7A13 to form a functional complex that transports anionic and neutral amino acids via exchange or facilitated diffusion. SLC7A13-SLC3A1 may act as a major transporter for L-cystine in late proximal tubules, ensuring its reabsorption from the luminal fluid in exchange for cytosolic L-glutamate or L-aspartate. This is Amino acid transporter heavy chain SLC3A1 from Homo sapiens (Human).